A 374-amino-acid polypeptide reads, in one-letter code: Pulmonary surfactant-associated protein D (374 aa).

An N-terminal signal peptide occupies residues 1 to 19 (MLHFLSMLVLLVQPLGDLG). Cys34 and Cys39 each carry S-nitrosocysteine. Positions 40–221 (SPTENGLPGR…RGIKGESGLP (182 aa)) are disordered. The Collagen-like domain maps to 45 to 221 (GLPGRDGRDG…RGIKGESGLP (177 aa)). The span at 49-64 (RDGRDGREGPRGEKGD) shows a compositional bias: basic and acidic residues. Pro77 carries the post-translational modification Hydroxyproline. Lys86 bears the 5-hydroxylysine mark. N-linked (GlcNAc...) asparagine glycosylation occurs at Asn89. A Hydroxyproline modification is found at Pro95. Lys98 bears the 5-hydroxylysine mark. Ser109 is subject to Phosphoserine. 2 stretches are compositionally biased toward low complexity: residues 137 to 163 (KGEA…PAGP) and 170 to 200 (PGEQ…RGPP). Pro170 and Pro176 each carry hydroxyproline. Positions 203 to 215 (KGDRGAPGDRGIK) are enriched in basic and acidic residues. The stretch at 222-253 (DSAALRQQMEALNGKLQRLEAAFSRYKKAALF) forms a coiled coil. Residues 259-374 (VGDKIFRAAN…GEQRLVICEF (116 aa)) form the C-type lectin domain. Disulfide bonds link Cys280-Cys372 and Cys350-Cys364.

This sequence belongs to the SFTPD family. Oligomeric complex of 4 set of homotrimers. Post-translationally, S-nitrosylation at Cys-34 and Cys-39 alters the quaternary structure which results in a pro-inflammatory chemoattractive signaling activity with macrophages.

The protein resides in the secreted. It localises to the extracellular space. It is found in the extracellular matrix. Its subcellular location is the surface film. In terms of biological role, contributes to the lung's defense against inhaled microorganisms, organic antigens and toxins. Interacts with compounds such as bacterial lipopolysaccharides, oligosaccharides and fatty acids and modulates leukocyte action in immune response. May participate in the extracellular reorganization or turnover of pulmonary surfactant. Binds strongly maltose residues and to a lesser extent other alpha-glucosyl moieties. This chain is Pulmonary surfactant-associated protein D (Sftpd), found in Rattus norvegicus (Rat).